Reading from the N-terminus, the 461-residue chain is MATFSRQEFFQQLLQGCLLPTAQQGLDQIWLLLAICLACRLLWRLGLPSYLKHASTVAGGFFSLYHFFQLHMVWVVLLSLLCYLVLFLCRHSSHRGVFLSVTILIYLLMGEMHMVDTVTWHKMRGAQMIVAMKAVSLGFDLDRGEVGTVPSPVEFMGYLYFVGTIVFGPWISFHSYLQAVQGRPLSCRWLQKVARSLALALLCLVLSTCVGPYLFPYFIPLNGDRLLRNKKRKARGTMVRWLRAYESAVSFHFSNYFVGFLSEATATLAGAGFTEEKDHLEWDLTVSKPLNVELPRSMVEVVTSWNLPMSYWLNNYVFKNALRLGTFSAVLVTYAASALLHGFSFHLAAVLLSLAFITYVEHVLRKRLARILSACVLSKRCPPDCSHQHRLGLGVRALNLLFGALAIFHLAYLGSLFDVDVDDTTEEQGYGMAYTVHKWSELSWASHWVTFGCWIFYRLIG.

The Cytoplasmic portion of the chain corresponds to 1–17 (MATFSRQEFFQQLLQGC). A helical membrane pass occupies residues 18 to 38 (LLPTAQQGLDQIWLLLAICLA). Residues 39–66 (CRLLWRLGLPSYLKHASTVAGGFFSLYH) are Extracellular-facing. A helical transmembrane segment spans residues 67–87 (FFQLHMVWVVLLSLLCYLVLF). Over 88-95 (LCRHSSHR) the chain is Cytoplasmic. A helical membrane pass occupies residues 96 to 116 (GVFLSVTILIYLLMGEMHMVD). The Extracellular portion of the chain corresponds to 117–152 (TVTWHKMRGAQMIVAMKAVSLGFDLDRGEVGTVPSP). Residues 153–173 (VEFMGYLYFVGTIVFGPWISF) traverse the membrane as a helical segment. Over 174–198 (HSYLQAVQGRPLSCRWLQKVARSLA) the chain is Cytoplasmic. Residue Cys-187 is the site of S-palmitoyl cysteine attachment. Residues 199 to 219 (LALLCLVLSTCVGPYLFPYFI) form a helical membrane-spanning segment. Topologically, residues 220-252 (PLNGDRLLRNKKRKARGTMVRWLRAYESAVSFH) are extracellular. A helical transmembrane segment spans residues 253–273 (FSNYFVGFLSEATATLAGAGF). Residues 274–337 (TEEKDHLEWD…SAVLVTYAAS (64 aa)) are Cytoplasmic-facing. Residues 338 to 358 (ALLHGFSFHLAAVLLSLAFIT) form a helical membrane-spanning segment. Residue His-341 is part of the active site. The Extracellular segment spans residues 359-396 (YVEHVLRKRLARILSACVLSKRCPPDCSHQHRLGLGVR). A helical transmembrane segment spans residues 397–417 (ALNLLFGALAIFHLAYLGSLF). Over 418–461 (DVDVDDTTEEQGYGMAYTVHKWSELSWASHWVTFGCWIFYRLIG) the chain is Cytoplasmic.

The protein belongs to the membrane-bound acyltransferase family. Porcupine subfamily. Interacts with WNT1, WNT3, WNT3A, WNT4, WNT5A, WNT5B, WNT6, WNT7A and WNT7B. In terms of tissue distribution, isoform 1 is expressed in fetal brain, brain, amygdala, caudate nucleus, cerebellum, hippocampus, pituitary, thalamus, heart, skeletal muscle and testis. Isoform 4 is expressed in amygdala, corpus callosum, hippocampus, spinal cord, kidney, liver, lung, spleen, uterus, testis. Isoform 2 and isoform 3 are expressed in substantia negra, spinal cord, heart and lung.

The protein localises to the endoplasmic reticulum membrane. It catalyses the reaction [Wnt protein]-L-serine + (9Z)-hexadecenoyl-CoA = [Wnt protein]-O-(9Z)-hexadecenoyl-L-serine + CoA. Its function is as follows. Protein-serine O-palmitoleoyltransferase that acts as a key regulator of the Wnt signaling pathway by mediating the attachment of palmitoleate, a 16-carbon monounsaturated fatty acid (C16:1(9Z)), to Wnt proteins. Serine palmitoleoylation of WNT proteins is required for efficient binding to frizzled receptors. The polypeptide is Protein-serine O-palmitoleoyltransferase porcupine (Homo sapiens (Human)).